Reading from the N-terminus, the 76-residue chain is Small ribosomal subunit protein uS17 (76 aa).

It belongs to the universal ribosomal protein uS17 family. In terms of assembly, part of the 30S ribosomal subunit.

In terms of biological role, one of the primary rRNA binding proteins, it binds specifically to the 5'-end of 16S ribosomal RNA. This chain is Small ribosomal subunit protein uS17, found in Anaplasma phagocytophilum (strain HZ).